A 313-amino-acid polypeptide reads, in one-letter code: HPr kinase/phosphorylase (313 aa).

Catalysis depends on residues histidine 140 and lysine 161. 155 to 162 is an ATP binding site; that stretch reads GDSGVGKS. Serine 162 provides a ligand contact to Mg(2+). Aspartate 179 acts as the Proton acceptor; for phosphorylation activity. Proton donor; for dephosphorylation activity in catalysis. Positions 203–212 are important for the catalytic mechanism of both phosphorylation and dephosphorylation; the sequence is LEIRGIGIID. Glutamate 204 contributes to the Mg(2+) binding site. Arginine 245 is a catalytic residue. The interval 266-271 is important for the catalytic mechanism of dephosphorylation; it reads PVKVGR.

This sequence belongs to the HPrK/P family. Homohexamer. Mg(2+) is required as a cofactor.

The catalysed reaction is [HPr protein]-L-serine + ATP = [HPr protein]-O-phospho-L-serine + ADP + H(+). It catalyses the reaction [HPr protein]-O-phospho-L-serine + phosphate + H(+) = [HPr protein]-L-serine + diphosphate. Functionally, catalyzes the ATP- as well as the pyrophosphate-dependent phosphorylation of a specific serine residue in HPr, a phosphocarrier protein of the phosphoenolpyruvate-dependent sugar phosphotransferase system (PTS). HprK/P also catalyzes the pyrophosphate-producing, inorganic phosphate-dependent dephosphorylation (phosphorolysis) of seryl-phosphorylated HPr (P-Ser-HPr). The two antagonistic activities of HprK/P are regulated by several intracellular metabolites, which change their concentration in response to the absence or presence of rapidly metabolisable carbon sources (glucose, fructose, etc.) in the growth medium. Therefore, by controlling the phosphorylation state of HPr, HPrK/P is a sensor enzyme that plays a major role in the regulation of carbon metabolism and sugar transport: it mediates carbon catabolite repression (CCR), and regulates PTS-catalyzed carbohydrate uptake and inducer exclusion. The polypeptide is HPr kinase/phosphorylase (Latilactobacillus sakei subsp. sakei (strain 23K) (Lactobacillus sakei subsp. sakei)).